The chain runs to 283 residues: Undecaprenyl-diphosphatase (283 aa).

7 helical membrane passes run 46–66 (PGVS…IAYF), 95–115 (VAMV…KFFW), 127–147 (VPSI…AECM), 154–174 (LGGV…LAVI), 200–220 (FSFL…LKSA), 227–247 (AGPL…WLAI), and 259–279 (TWIF…WWAF).

The protein belongs to the UppP family.

It localises to the cell inner membrane. The enzyme catalyses di-trans,octa-cis-undecaprenyl diphosphate + H2O = di-trans,octa-cis-undecaprenyl phosphate + phosphate + H(+). In terms of biological role, catalyzes the dephosphorylation of undecaprenyl diphosphate (UPP). Confers resistance to bacitracin. The sequence is that of Undecaprenyl-diphosphatase from Synechococcus sp. (strain CC9902).